A 361-amino-acid polypeptide reads, in one-letter code: tRNA 2-selenouridine synthase (361 aa).

The Rhodanese domain maps to 11–134 (LLADTPLIDV…LRQTAIQATW (124 aa)). C94 serves as the catalytic S-selanylcysteine intermediate.

It belongs to the SelU family. As to quaternary structure, monomer.

The enzyme catalyses 5-methylaminomethyl-2-thiouridine(34) in tRNA + selenophosphate + (2E)-geranyl diphosphate + H2O + H(+) = 5-methylaminomethyl-2-selenouridine(34) in tRNA + (2E)-thiogeraniol + phosphate + diphosphate. It carries out the reaction 5-methylaminomethyl-2-thiouridine(34) in tRNA + (2E)-geranyl diphosphate = 5-methylaminomethyl-S-(2E)-geranyl-thiouridine(34) in tRNA + diphosphate. The catalysed reaction is 5-methylaminomethyl-S-(2E)-geranyl-thiouridine(34) in tRNA + selenophosphate + H(+) = 5-methylaminomethyl-2-(Se-phospho)selenouridine(34) in tRNA + (2E)-thiogeraniol. It catalyses the reaction 5-methylaminomethyl-2-(Se-phospho)selenouridine(34) in tRNA + H2O = 5-methylaminomethyl-2-selenouridine(34) in tRNA + phosphate. In terms of biological role, involved in the post-transcriptional modification of the uridine at the wobble position (U34) of tRNA(Lys), tRNA(Glu) and tRNA(Gln). Catalyzes the conversion of 2-thiouridine (S2U-RNA) to 2-selenouridine (Se2U-RNA). Acts in a two-step process involving geranylation of 2-thiouridine (S2U) to S-geranyl-2-thiouridine (geS2U) and subsequent selenation of the latter derivative to 2-selenouridine (Se2U) in the tRNA chain. The chain is tRNA 2-selenouridine synthase from Salmonella schwarzengrund (strain CVM19633).